The sequence spans 146 residues: MGSLPVRIKRLRATPLPAYMTEHAAGVDLCASLSADFVLAPGERALVPTGLAIELPPGFEAQVRPRSGLALRHGIALVNSPGTIDADYRGEIGVILINLGSEPFTVSDGERIAQMVFARCERAEFIEVDELGDTARGAGGFGHTGR.

Substrate is bound by residues Arg66–Gly68, Asn79, and Thr83–Asp85.

Belongs to the dUTPase family. Mg(2+) serves as cofactor.

The enzyme catalyses dUTP + H2O = dUMP + diphosphate + H(+). The protein operates within pyrimidine metabolism; dUMP biosynthesis; dUMP from dCTP (dUTP route): step 2/2. This enzyme is involved in nucleotide metabolism: it produces dUMP, the immediate precursor of thymidine nucleotides and it decreases the intracellular concentration of dUTP so that uracil cannot be incorporated into DNA. In Citrifermentans bemidjiense (strain ATCC BAA-1014 / DSM 16622 / JCM 12645 / Bem) (Geobacter bemidjiensis), this protein is Deoxyuridine 5'-triphosphate nucleotidohydrolase.